Reading from the N-terminus, the 371-residue chain is Dual-specificity RNA methyltransferase RlmN (371 aa).

Catalysis depends on E92, which acts as the Proton acceptor. The region spanning 98–337 is the Radical SAM core domain; the sequence is EADRATLCVS…VTVRKTRGDD (240 aa). C105 and C342 are disulfide-bonded. Residues C112, C116, and C119 each coordinate [4Fe-4S] cluster. Residues 166–167, S198, 220–222, and N299 each bind S-adenosyl-L-methionine; these read GE and SLH. C342 serves as the catalytic S-methylcysteine intermediate.

The protein belongs to the radical SAM superfamily. RlmN family. [4Fe-4S] cluster is required as a cofactor.

The protein resides in the cytoplasm. The catalysed reaction is adenosine(2503) in 23S rRNA + 2 reduced [2Fe-2S]-[ferredoxin] + 2 S-adenosyl-L-methionine = 2-methyladenosine(2503) in 23S rRNA + 5'-deoxyadenosine + L-methionine + 2 oxidized [2Fe-2S]-[ferredoxin] + S-adenosyl-L-homocysteine. It carries out the reaction adenosine(37) in tRNA + 2 reduced [2Fe-2S]-[ferredoxin] + 2 S-adenosyl-L-methionine = 2-methyladenosine(37) in tRNA + 5'-deoxyadenosine + L-methionine + 2 oxidized [2Fe-2S]-[ferredoxin] + S-adenosyl-L-homocysteine. Functionally, specifically methylates position 2 of adenine 2503 in 23S rRNA and position 2 of adenine 37 in tRNAs. m2A2503 modification seems to play a crucial role in the proofreading step occurring at the peptidyl transferase center and thus would serve to optimize ribosomal fidelity. In Actinobacillus succinogenes (strain ATCC 55618 / DSM 22257 / CCUG 43843 / 130Z), this protein is Dual-specificity RNA methyltransferase RlmN.